The chain runs to 290 residues: Shikimate dehydrogenase (NADP(+)) (290 aa).

Residues 21-23 (SLS) and Thr68 each bind shikimate. Lys72 serves as the catalytic Proton acceptor. NADP(+) is bound at residue Glu84. Shikimate-binding residues include Asn93 and Asp108. Residues 132 to 136 (GYGGA) and Leu230 contribute to the NADP(+) site. Residue Tyr232 coordinates shikimate. Gly253 provides a ligand contact to NADP(+).

The protein belongs to the shikimate dehydrogenase family. In terms of assembly, homodimer.

It carries out the reaction shikimate + NADP(+) = 3-dehydroshikimate + NADPH + H(+). The protein operates within metabolic intermediate biosynthesis; chorismate biosynthesis; chorismate from D-erythrose 4-phosphate and phosphoenolpyruvate: step 4/7. In terms of biological role, involved in the biosynthesis of the chorismate, which leads to the biosynthesis of aromatic amino acids. Catalyzes the reversible NADPH linked reduction of 3-dehydroshikimate (DHSA) to yield shikimate (SA). This is Shikimate dehydrogenase (NADP(+)) from Synechocystis sp. (strain ATCC 27184 / PCC 6803 / Kazusa).